The following is a 483-amino-acid chain: ATP-dependent RNA helicase DDX25 (483 aa).

The Q motif signature appears at 97-125; that stretch reads KSFEELHLKNELLRGIYAMGFNRPSKIQE. The Helicase ATP-binding domain occupies 130–300; the sequence is MMLADPPQNL…ERIVPDPNII (171 aa). 143 to 150 serves as a coordination point for ATP; it reads SQSGTGKT. Residues 247 to 250 carry the DEAD box motif; that stretch reads DEAD. One can recognise a Helicase C-terminal domain in the interval 311 to 478; sequence NIQQFYDQCE…KLNSMDMDEM (168 aa).

Belongs to the DEAD box helicase family. An mRNA component of germ plasm. Localizes to the granulo-fibrillar material (GFM) of the mitochondrial cloud in stage I oocytes. Associated, at a low level, with the periphery of mature germinal granules in later stage oocytes. Localizes to the vegetal cortex in stage II oocytes and segregates with germ plasm during early embryogenesis. In adults, expression is restricted to the ovary and, at a lower level, to spermatogonia, spermatocytes and spermatids of the testis.

It localises to the cytoplasm. It is found in the nucleus. It carries out the reaction ATP + H2O = ADP + phosphate + H(+). Functionally, ATP-dependent RNA helicase. The chain is ATP-dependent RNA helicase DDX25 from Xenopus laevis (African clawed frog).